The primary structure comprises 782 residues: Translation initiation factor IF-2 (782 aa).

The interval 47-196 (DNAIDGTNKK…TPPKPKELPE (150 aa)) is disordered. Residues 53 to 65 (TNKKAEAPKKETT) show a composition bias toward basic and acidic residues. Residues 66–81 (SNENGNSKGPNKPNMT) are compositionally biased toward polar residues. Low complexity-rich tracts occupy residues 82–93 (NSNEKSNKPNNP) and 118–170 (NTSK…NNKG). The 170-residue stretch at 283–452 (ERPPVVTIMG…LLVSEVEELK (170 aa)) folds into the tr-type G domain. Residues 292–299 (GHVDHGKT) are G1. GTP is bound at residue 292-299 (GHVDHGKT). A G2 region spans residues 317–321 (GITQH). The tract at residues 338–341 (DTPG) is G3. GTP is bound by residues 338–342 (DTPGH) and 392–395 (NKID). The G4 stretch occupies residues 392–395 (NKID). The interval 428–430 (SAK) is G5.

Belongs to the TRAFAC class translation factor GTPase superfamily. Classic translation factor GTPase family. IF-2 subfamily.

The protein localises to the cytoplasm. Functionally, one of the essential components for the initiation of protein synthesis. Protects formylmethionyl-tRNA from spontaneous hydrolysis and promotes its binding to the 30S ribosomal subunits. Also involved in the hydrolysis of GTP during the formation of the 70S ribosomal complex. The chain is Translation initiation factor IF-2 from Listeria monocytogenes serotype 4b (strain CLIP80459).